Reading from the N-terminus, the 168-residue chain is 3-dehydroquinate dehydratase (168 aa).

Residue Tyr22 is the Proton acceptor of the active site. Positions 76, 82, and 89 each coordinate substrate. Residue His102 is the Proton donor of the active site. Substrate contacts are provided by residues 103 to 104 (LT) and Arg113.

This sequence belongs to the type-II 3-dehydroquinase family. As to quaternary structure, homododecamer.

It catalyses the reaction 3-dehydroquinate = 3-dehydroshikimate + H2O. It functions in the pathway metabolic intermediate biosynthesis; chorismate biosynthesis; chorismate from D-erythrose 4-phosphate and phosphoenolpyruvate: step 3/7. Its function is as follows. Catalyzes a trans-dehydration via an enolate intermediate. This is 3-dehydroquinate dehydratase from Helicobacter acinonychis (strain Sheeba).